A 160-amino-acid chain; its full sequence is MAKYEIMLVVRGDLDQEQANKVANELKATLKNTEVKENNYDGVQQLAYEINKLKTAYRYVYNFETTDVSLINEFRRLAIINKNVLRHIIINLEKDYGYKATVNTKKVQRNEKRAEVYARQKEEAERRAVERQAAYEAMKAEREAAGLPVKEFVKNTNSKR.

It belongs to the bacterial ribosomal protein bS6 family.

Its function is as follows. Binds together with bS18 to 16S ribosomal RNA. This Ureaplasma parvum serovar 3 (strain ATCC 27815 / 27 / NCTC 11736) protein is Small ribosomal subunit protein bS6.